A 118-amino-acid chain; its full sequence is MPRVKRGVTARARHKKVISAAKGFRGRRNNVYRIAKQAVMRAGQYAYRDRRNKKRVFRALWIARINAGAREHGLTYSKFMNGLKKASIELDRKVLSDMAIHDKVAFAAIVNQVKANVA.

This sequence belongs to the bacterial ribosomal protein bL20 family.

In terms of biological role, binds directly to 23S ribosomal RNA and is necessary for the in vitro assembly process of the 50S ribosomal subunit. It is not involved in the protein synthesizing functions of that subunit. This Ralstonia pickettii (strain 12J) protein is Large ribosomal subunit protein bL20.